We begin with the raw amino-acid sequence, 86 residues long: uncharacterized protein (86 aa).

In terms of tissue distribution, retina-specific.

This is an uncharacterized protein from Homo sapiens (Human).